The primary structure comprises 492 residues: Alpha/beta hydrolase ucsC (492 aa).

The active-site Nucleophile is the S258.

The protein belongs to the AB hydrolase superfamily. FUS2 hydrolase family. In terms of assembly, homodimer.

Its pathway is mycotoxin biosynthesis. In terms of biological role, alpha/beta hydrolase; part of the gene cluster that mediates the biosynthesis of UCS1025A, a member of the pyrrolizidinone family that acts as a strong telomerase inhibitor and displays potent antibacterial and antitumor properties. These compounds share a hemiaminal-containing pyrrolizidinone core fused with a gamma-lactone, giving a furopyrrolizidine that is connected to a decalin fragment. The polyketide synthase module (PKS) of the PKS-NRPS ucsA is responsible for the synthesis of the polyketide backbone via the condensation of an acetyl-CoA starter unit with 6 malonyl-CoA units. The downstream nonribosomal peptide synthetase (NRPS) module then amidates the carboxyl end of the polyketide with a 2S,3S-methylproline derived from L-isoleucine by the 2-oxoglutarate-dependent dioxygenase ucsF which converts L-isoleucine to (4S,5S)-4-methylpyrroline-5-carboxylate that is further converted to 2S,3S-methylproline by the pyrroline-5-carboxylate reductase ucsG. Reductive release of the completed aminoacyl polyketide from the assembly line can form the 3-pyrrolin-2-one structure via an intramolecular Knoevenagel reaction. Because ucsA lacks a designated enoylreductase (ER) domain, the required activity is provided the enoyl reductase ucsL. This keto acyclic precursor is the substrate of the Diels-Alderase ucsH, that catalyzes the Diels-Alder cycloaddition. Oxidation of the 3S-methyl group to a carboxylate by the cytochrome P450 monooxygenase ucsK allows an oxa-Michael cyclization that might involve the reductase/dehydrogenase ucsI and which furnishes the furopyrrolizidine. The oxidase ucsJ likely plays a critical role in stereoselective reduction of the C5-C6 double bond to afford the required R-configured carboxylate group. Further enolization and oxidation at C5 by an unidentified enzyme affords the last intermediate that can undergo oxa-Michael cyclization to yield UCS1025A. This chain is Alpha/beta hydrolase ucsC, found in Acremonium sp.